A 233-amino-acid polypeptide reads, in one-letter code: UPF0502 protein Sden_2282 (233 aa).

A compositionally biased stretch (polar residues) spans 178–198 (TQHQRPPQTPHLSSRTNVDNS). The tract at residues 178–204 (TQHQRPPQTPHLSSRTNVDNSYESDER) is disordered.

Belongs to the UPF0502 family.

The protein is UPF0502 protein Sden_2282 of Shewanella denitrificans (strain OS217 / ATCC BAA-1090 / DSM 15013).